The following is a 267-amino-acid chain: DNA repair protein RecO (267 aa).

Belongs to the RecO family.

Involved in DNA repair and RecF pathway recombination. This is DNA repair protein RecO from Prochlorococcus marinus (strain MIT 9303).